The sequence spans 421 residues: Alpha-1-antitrypsin-related protein (421 aa).

The first 21 residues, 1-21 (MPFSVSWGILLLAGLCCLVPS), serve as a signal peptide directing secretion. 4 N-linked (GlcNAc...) asparagine glycosylation sites follow: Asn56, Asn110, Asn148, and Asn274.

The protein belongs to the serpin family. As to quaternary structure, interacts with CANX and PDIA3. Glycosylated. As to expression, expressed in the liver, leukocytes and testis. Also detected in brain, colon, uterus, esophagus, spleen, trachea, kidney and lung.

It localises to the endoplasmic reticulum. Putative serine protease inhibitor. The sequence is that of Alpha-1-antitrypsin-related protein (SERPINA2) from Homo sapiens (Human).